Here is a 280-residue protein sequence, read N- to C-terminus: Ribonuclease Z (280 aa).

Zn(2+) is bound by residues histidine 61, histidine 63, aspartate 65, histidine 66, histidine 153, aspartate 176, and histidine 240. Aspartate 65 functions as the Proton acceptor in the catalytic mechanism.

The protein belongs to the RNase Z family. As to quaternary structure, homodimer. Requires Zn(2+) as cofactor.

It carries out the reaction Endonucleolytic cleavage of RNA, removing extra 3' nucleotides from tRNA precursor, generating 3' termini of tRNAs. A 3'-hydroxy group is left at the tRNA terminus and a 5'-phosphoryl group is left at the trailer molecule.. Zinc phosphodiesterase, which displays some tRNA 3'-processing endonuclease activity. Probably involved in tRNA maturation, by removing a 3'-trailer from precursor tRNA. The chain is Ribonuclease Z from Mycobacterium avium (strain 104).